We begin with the raw amino-acid sequence, 334 residues long: Zinc finger Ran-binding domain-containing protein 2 (334 aa).

2 consecutive RanBP2-type zinc fingers follow at residues 9–40 and 65–94; these read SDGD…EKTT and SAND…PKYA. The disordered stretch occupies residues 117–334; that stretch reads REESDGEYDE…SGSRTSSKKK (218 aa). Acidic residues predominate over residues 150–163; that stretch reads DKESEGEDEEDEDG. A compositionally biased stretch (basic residues) spans 196–212; the sequence is KKKKSNRRSRSKSRSSH. Low complexity-rich tracts occupy residues 213–224 and 258–285; these read SRSSSRSSSHSS and SRSS…SSSP. A compositionally biased stretch (basic residues) spans 302-318; the sequence is RKKRRSRSRSPERRRRS. Over residues 319–334 the composition is skewed to low complexity; the sequence is SSGSSHSGSRTSSKKK.

This sequence belongs to the ZRANB2 family.

Its subcellular location is the nucleus. In terms of biological role, may regulate alternative splicing by interfering with constitutive 5'-splice site selection. In Gallus gallus (Chicken), this protein is Zinc finger Ran-binding domain-containing protein 2.